The sequence spans 98 residues: Small ribosomal subunit protein uS19 (98 aa).

Residues 77–98 (TRTFRGHAGGKAEKGGSAPKRK) are disordered.

It belongs to the universal ribosomal protein uS19 family.

Protein S19 forms a complex with S13 that binds strongly to the 16S ribosomal RNA. The polypeptide is Small ribosomal subunit protein uS19 (Chlorobium luteolum (strain DSM 273 / BCRC 81028 / 2530) (Pelodictyon luteolum)).